Here is a 247-residue protein sequence, read N- to C-terminus: Acetoacetate decarboxylase (247 aa).

Lys116 functions as the Schiff-base intermediate with acetoacetate in the catalytic mechanism.

It belongs to the ADC family.

The catalysed reaction is acetoacetate + H(+) = acetone + CO2. In terms of biological role, catalyzes the conversion of acetoacetate to acetone and carbon dioxide. In Ralstonia nicotianae (strain ATCC BAA-1114 / GMI1000) (Ralstonia solanacearum), this protein is Acetoacetate decarboxylase.